A 111-amino-acid chain; its full sequence is uncharacterized protein (111 aa).

The next 4 helical transmembrane spans lie at phenylalanine 4–phenylalanine 21, leucine 28–tyrosine 47, threonine 51–phenylalanine 73, and serine 80–methionine 102.

It is found in the cell membrane. This is an uncharacterized protein from Bacillus subtilis (strain 168).